Consider the following 68-residue polypeptide: Purkinje cell protein 4-like protein 1 (68 aa).

A compositionally biased stretch (polar residues) spans 1–16 (MSELNTKTSPATNQAA). Residues 1–45 (MSELNTKTSPATNQAAGQEEKGKAGNVKKAEEEEEIDIDLTAPET) form a disordered region. Residue Thr-8 is modified to Phosphothreonine. The span at 18–31 (QEEKGKAGNVKKAE) shows a compositional bias: basic and acidic residues. The IQ domain occupies 45 to 68 (TEKAALAIQGKFRRFQKRKKDPSS).

The protein belongs to the PCP4 family.

The chain is Purkinje cell protein 4-like protein 1 (PCP4L1) from Homo sapiens (Human).